The chain runs to 248 residues: 2,3-bisphosphoglycerate-dependent phosphoglycerate mutase (248 aa).

Substrate contacts are provided by residues 8-15 (RHGESVWN), 21-22 (TG), Arg60, 87-90 (ERHY), Lys98, 114-115 (RR), and 183-184 (GN). His9 serves as the catalytic Tele-phosphohistidine intermediate. Glu87 acts as the Proton donor/acceptor in catalysis.

Belongs to the phosphoglycerate mutase family. BPG-dependent PGAM subfamily.

The catalysed reaction is (2R)-2-phosphoglycerate = (2R)-3-phosphoglycerate. It participates in carbohydrate degradation; glycolysis; pyruvate from D-glyceraldehyde 3-phosphate: step 3/5. Functionally, catalyzes the interconversion of 2-phosphoglycerate and 3-phosphoglycerate. The protein is 2,3-bisphosphoglycerate-dependent phosphoglycerate mutase of Brachyspira hyodysenteriae (strain ATCC 49526 / WA1).